The chain runs to 240 residues: Lipoprotein-releasing system ATP-binding protein LolD (240 aa).

The 226-residue stretch at 15–240 (IRAESLGKTY…GLRELTSAEV (226 aa)) folds into the ABC transporter domain. 51–58 (GASGAGKS) is an ATP binding site.

It belongs to the ABC transporter superfamily. Lipoprotein translocase (TC 3.A.1.125) family. The complex is composed of two ATP-binding proteins (LolD) and two transmembrane proteins (LolC and LolE).

It localises to the cell inner membrane. In terms of biological role, part of the ABC transporter complex LolCDE involved in the translocation of mature outer membrane-directed lipoproteins, from the inner membrane to the periplasmic chaperone, LolA. Responsible for the formation of the LolA-lipoprotein complex in an ATP-dependent manner. This Xylella fastidiosa (strain Temecula1 / ATCC 700964) protein is Lipoprotein-releasing system ATP-binding protein LolD.